The primary structure comprises 416 residues: Enterobactin exporter EntS (416 aa).

The Cytoplasmic portion of the chain corresponds to 1-21; sequence MNKQSWLLNLSLLKTHPAFRA. Residues 22–42 traverse the membrane as a helical segment; that stretch reads VFLARFISIVSLGLLGVAVPV. Topologically, residues 43 to 55 are periplasmic; that stretch reads QIQMMTHSTWQVG. A helical transmembrane segment spans residues 56–76; sequence LSVTLTGGAMFVGLMVGGVLA. Residues 77–83 lie on the Cytoplasmic side of the membrane; sequence DRYERKK. The helical transmembrane segment at 84–104 threads the bilayer; sequence VILLARGTCGIGFIGLCLNAL. Topologically, residues 105-109 are periplasmic; that stretch reads LPEPS. Residues 110-130 traverse the membrane as a helical segment; that stretch reads LLAIYLLGLWDGFFASLGVTA. The Cytoplasmic portion of the chain corresponds to 131-156; the sequence is LLAATPALVGRENLMQAGAITMLTVR. A helical membrane pass occupies residues 157-177; sequence LGSVISPMIGGLLLATGGVAW. Residue asparagine 178 is a topological domain, periplasmic. A helical transmembrane segment spans residues 179–199; that stretch reads YGLAAAGTFITLLPLLSLPAL. The Cytoplasmic portion of the chain corresponds to 200–218; it reads PPPPQPREHPLKSLLAGFR. The chain crosses the membrane as a helical span at residues 219 to 239; sequence FLLASPLVGGIALLGGLLTMA. Residues 240 to 256 are Periplasmic-facing; sequence SAVRVLYPALADNWQMS. Residues 257–277 traverse the membrane as a helical segment; it reads AAQIGFLYAAIPLGAAIGALT. At 278-287 the chain is on the cytoplasmic side; that stretch reads SGKLAHSARP. A helical membrane pass occupies residues 288–307; that stretch reads GLLMLLSTLGSFLAIGLFGL. Residues 308 to 313 lie on the Periplasmic side of the membrane; it reads MPMWIL. A helical membrane pass occupies residues 314–336; it reads GVVCLALFGWLSAVSSLLQYTML. The Cytoplasmic portion of the chain corresponds to 337-356; that stretch reads QTQTPEAMLGRINGLWTAQN. The helical transmembrane segment at 357–377 threads the bilayer; that stretch reads VTGDAIGAALLGGLGAMMTPV. Alanine 378 is a topological domain (periplasmic). Residues 379–399 traverse the membrane as a helical segment; it reads SASASGFGLLIIGVLLLLVLV. The Cytoplasmic portion of the chain corresponds to 400–416; that stretch reads ELRHFRQTPPQVTASDS.

It belongs to the major facilitator superfamily. EntS (TC 2.A.1.38) family.

The protein resides in the cell inner membrane. In terms of biological role, component of an export pathway for enterobactin. The chain is Enterobactin exporter EntS from Escherichia coli (strain K12 / MC4100 / BW2952).